The sequence spans 94 residues: Large ribosomal subunit protein bL25 (94 aa).

It belongs to the bacterial ribosomal protein bL25 family. As to quaternary structure, part of the 50S ribosomal subunit; part of the 5S rRNA/L5/L18/L25 subcomplex. Contacts the 5S rRNA. Binds to the 5S rRNA independently of L5 and L18.

In terms of biological role, this is one of the proteins that binds to the 5S RNA in the ribosome where it forms part of the central protuberance. The chain is Large ribosomal subunit protein bL25 from Klebsiella pneumoniae (strain 342).